The chain runs to 337 residues: Angiopoietin-related protein 7 (337 aa).

The signal sequence occupies residues 1 to 21; the sequence is MLRETWLCVILVAFVSHPVWL. Positions 30–110 form a coiled coil; sequence QLKAAGCCEE…DIMQLQAAQT (81 aa). An N-linked (GlcNAc...) asparagine glycan is attached at Asn-49. Residues 113-334 enclose the Fibrinogen C-terminal domain; sequence QTSADAIYDC…RVEMKIRPEA (222 aa). Cys-122 and Cys-153 are oxidised to a cystine. N-linked (GlcNAc...) asparagine glycans are attached at residues Asn-244 and Asn-258. The cysteines at positions 276 and 289 are disulfide-linked. Asn-320 carries an N-linked (GlcNAc...) asparagine glycan.

Homotetramer; disulfide-linked.

The protein resides in the secreted. In terms of biological role, has a role in the formation and organization of the extracellular matrix. In the eye, it functions as a mediator of dexamethasone-induced matrix deposition in the trabecular meshwork, the tissue responsible for the outflow of the ocular aqueous humor and for the maintenance of intraocular pressure. Is a negative regulator of angiogenesis in the cornea, and plays a major role in maintaining corneal avascularity and transparency. This Mus musculus (Mouse) protein is Angiopoietin-related protein 7 (Angptl7).